Consider the following 485-residue polypeptide: UDP-N-acetylmuramate--L-alanine ligase (485 aa).

127 to 133 (GTHGKTT) contacts ATP.

The protein belongs to the MurCDEF family.

The protein localises to the cytoplasm. It carries out the reaction UDP-N-acetyl-alpha-D-muramate + L-alanine + ATP = UDP-N-acetyl-alpha-D-muramoyl-L-alanine + ADP + phosphate + H(+). The protein operates within cell wall biogenesis; peptidoglycan biosynthesis. Its function is as follows. Cell wall formation. The chain is UDP-N-acetylmuramate--L-alanine ligase from Shewanella frigidimarina (strain NCIMB 400).